A 90-amino-acid chain; its full sequence is Probable Fe(2+)-trafficking protein (90 aa).

The protein belongs to the Fe(2+)-trafficking protein family. Monomer.

Its function is as follows. Could be a mediator in iron transactions between iron acquisition and iron-requiring processes, such as synthesis and/or repair of Fe-S clusters in biosynthetic enzymes. The protein is Probable Fe(2+)-trafficking protein of Proteus mirabilis (strain HI4320).